A 113-amino-acid polypeptide reads, in one-letter code: Beta-microseminoprotein (113 aa).

Positions 1–20 (MEAWLGSLLFLATMVIASKA) are cleaved as a signal peptide. Disulfide bonds link Cys-22/Cys-69, Cys-38/Cys-61, Cys-56/Cys-92, Cys-59/Cys-68, and Cys-83/Cys-106.

Belongs to the beta-microseminoprotein family. As to quaternary structure, homodimer; Interacts with PI16.

Its subcellular location is the secreted. This Mus musculus (Mouse) protein is Beta-microseminoprotein (Msmb).